Consider the following 1230-residue polypeptide: SAM and SH3 domain-containing protein 1 (1230 aa).

A compositionally biased stretch (low complexity) spans Met1–Pro10. Residues Met1–Val30 are disordered. A phosphoserine mark is found at Ser83 and Ser241. Disordered regions lie at residues Arg211 to Val249 and Lys275 to Trp337. A compositionally biased stretch (basic and acidic residues) spans Lys275–Ser297. Over residues Ser324–Thr336 the composition is skewed to low complexity. A Phosphoserine modification is found at Ser400. Disordered stretches follow at residues Pro439–Asp566, Glu610–Asp633, and Val705–Asp792. Positions Lys461–Asp470 are enriched in polar residues. A compositionally biased stretch (basic and acidic residues) spans Pro485–Lys494. The span at Gly498–Gly516 shows a compositional bias: low complexity. Polar residues predominate over residues Gln517–Arg529. An SH3 domain is found at Pro547 to Glu608. Over residues Arg615–Arg624 the composition is skewed to basic residues. The SAM 1 domain occupies Ser626–Tyr690. The segment covering Val737–Asn758 has biased composition (polar residues). Positions Gly768 to Leu779 are enriched in basic and acidic residues. Phosphoserine is present on residues Ser813 and Ser831. Disordered regions lie at residues Glu818–Gly875 and Pro915–Ala1045. The segment at Asn844–Thr852 is required for interaction with TRAF6. Positions Thr852–Thr868 are enriched in polar residues. The segment covering Gly940–Val956 has biased composition (basic and acidic residues). Residues Ala962–Pro972 show a composition bias toward polar residues. A compositionally biased stretch (low complexity) spans Ser1008–Pro1019. The SAM 2 domain maps to Gly1160–Pro1224.

As to quaternary structure, interacts with GNAS. Interacts with IQGAP1. Interacts with TRAF6 (via C-terminus); the interaction is LPS-dependent. Interacts with MAP3K7, CHUK and IKBKB. As to expression, expressed in the microvascular endothelium of various organs, as well as in parenchymal cells. Expressed in the endothelium but not lymphoid cells of spleen and thymus.

It localises to the cytoplasm. Is a positive regulator of NF-kappa-B signaling downstream of TLR4 activation. It acts as a scaffold molecule to assemble a molecular complex that includes TRAF6, MAP3K7, CHUK and IKBKB, thereby facilitating NF-kappa-B signaling activation. Regulates TRAF6 and MAP3K7 ubiquitination. Involved in the regulation of cell mobility. Regulates lipolysaccharide (LPS)-induced endothelial cell migration. Is involved in the regulation of skin pigmentation through the control of melanocyte migration in the epidermis. The polypeptide is SAM and SH3 domain-containing protein 1 (Sash1) (Mus musculus (Mouse)).